A 213-amino-acid chain; its full sequence is Uracil phosphoribosyltransferase (213 aa).

5-phospho-alpha-D-ribose 1-diphosphate-binding positions include Arg-78, Arg-103, and 131-139 (DPMLATGGT). Residues Ile-197 and 202-204 (GDA) contribute to the uracil site. Asp-203 contacts 5-phospho-alpha-D-ribose 1-diphosphate.

This sequence belongs to the UPRTase family. Mg(2+) serves as cofactor.

It carries out the reaction UMP + diphosphate = 5-phospho-alpha-D-ribose 1-diphosphate + uracil. Its pathway is pyrimidine metabolism; UMP biosynthesis via salvage pathway; UMP from uracil: step 1/1. With respect to regulation, allosterically activated by GTP. In terms of biological role, catalyzes the conversion of uracil and 5-phospho-alpha-D-ribose 1-diphosphate (PRPP) to UMP and diphosphate. The chain is Uracil phosphoribosyltransferase from Bifidobacterium animalis subsp. lactis (strain AD011).